Consider the following 460-residue polypeptide: V-type ATP synthase beta chain (460 aa).

It belongs to the ATPase alpha/beta chains family.

Produces ATP from ADP in the presence of a proton gradient across the membrane. The V-type beta chain is a regulatory subunit. This is V-type ATP synthase beta chain from Clostridium perfringens (strain ATCC 13124 / DSM 756 / JCM 1290 / NCIMB 6125 / NCTC 8237 / Type A).